The chain runs to 433 residues: Transcriptional enhancer factor TEF-5 (433 aa).

A compositionally biased stretch (polar residues) spans 1–12 (MASNSWNASSSP). Residues 1–35 (MASNSWNASSSPGEGREDGQDGMDKSLDNDAEGVW) form a disordered region. Basic and acidic residues predominate over residues 14 to 28 (EGREDGQDGMDKSLD). A DNA-binding region (TEA) is located at residues 28–104 (DNDAEGVWSP…QVLARREISG (77 aa)). Residues 171–433 (GPSQDIKPFA…QHHVYKLVKD (263 aa)) are transcriptional activation.

In terms of tissue distribution, high levels in cardiac muscle, low in skeletal muscle. Intermediate levels in gizzard and lung, low levels in kidney.

It localises to the nucleus. Its function is as follows. Transcription factor which plays a key role in the Hippo signaling pathway, a pathway involved in organ size control and tumor suppression by restricting proliferation and promoting apoptosis. The core of this pathway is composed of a kinase cascade wherein MST1/MST2, in complex with its regulatory protein SAV1, phosphorylates and activates LATS1/2 in complex with its regulatory protein MOB1, which in turn phosphorylates and inactivates YAP1 oncoprotein and WWTR1/TAZ. In Gallus gallus (Chicken), this protein is Transcriptional enhancer factor TEF-5 (TEAD3).